Consider the following 75-residue polypeptide: UPF0352 protein YejL (75 aa).

It belongs to the UPF0352 family.

The sequence is that of UPF0352 protein YejL from Salmonella arizonae (strain ATCC BAA-731 / CDC346-86 / RSK2980).